The following is a 90-amino-acid chain: Molybdopterin synthase sulfur carrier subunit (90 aa).

1-thioglycine; alternate is present on Gly90. Gly90 carries the glycyl adenylate; alternate modification.

Belongs to the MoaD family. MOCS2A subfamily. As to quaternary structure, heterotetramer; composed of 2 small (Mocs2A) and 2 large (Mocs2B) subunits. In terms of processing, C-terminal thiocarboxylation occurs in 2 steps, it is first acyl-adenylated (-COAMP) via the hesA/moeB/thiF part of MOCS3, then thiocarboxylated (-COSH) via the rhodanese domain of MOCS3.

Its subcellular location is the cytoplasm. Its pathway is cofactor biosynthesis; molybdopterin biosynthesis. In terms of biological role, acts as a sulfur carrier required for molybdopterin biosynthesis. Component of the molybdopterin synthase complex that catalyzes the conversion of precursor Z into molybdopterin by mediating the incorporation of 2 sulfur atoms into precursor Z to generate a dithiolene group. In the complex, serves as sulfur donor by being thiocarboxylated (-COSH) at its C-terminus by MOCS3. After interaction with Mocs2B, the sulfur is then transferred to precursor Z to form molybdopterin. The chain is Molybdopterin synthase sulfur carrier subunit from Drosophila sechellia (Fruit fly).